A 463-amino-acid polypeptide reads, in one-letter code: Protein DML1 (463 aa).

The protein belongs to the misato family.

It localises to the mitochondrion. Involved in the partitioning of the mitochondrial organelle and mitochondrial DNA (mtDNA) inheritance. The sequence is that of Protein DML1 (DML1) from Debaryomyces hansenii (strain ATCC 36239 / CBS 767 / BCRC 21394 / JCM 1990 / NBRC 0083 / IGC 2968) (Yeast).